The primary structure comprises 179 residues: Large ribosomal subunit protein uL5 (179 aa).

Belongs to the universal ribosomal protein uL5 family. As to quaternary structure, part of the 50S ribosomal subunit; part of the 5S rRNA/L5/L18/L25 subcomplex. Contacts the 5S rRNA and the P site tRNA. Forms a bridge to the 30S subunit in the 70S ribosome.

This is one of the proteins that bind and probably mediate the attachment of the 5S RNA into the large ribosomal subunit, where it forms part of the central protuberance. In the 70S ribosome it contacts protein S13 of the 30S subunit (bridge B1b), connecting the 2 subunits; this bridge is implicated in subunit movement. Contacts the P site tRNA; the 5S rRNA and some of its associated proteins might help stabilize positioning of ribosome-bound tRNAs. This chain is Large ribosomal subunit protein uL5, found in Pseudoalteromonas translucida (strain TAC 125).